The chain runs to 563 residues: Putative solute carrier family 26 member 10P (563 aa).

5 helical membrane-spanning segments follow: residues 45–65 (ALLA…PVLI), 75–91 (LSTG…GSAV), 116–136 (VGVA…MFVL), 152–172 (ALTS…LLGL), and 352–372 (LAGL…GPFF). The 136-residue stretch at 406–541 (RVDFLLQVPG…VSVQDAAAYA (136 aa)) folds into the STAS domain.

Belongs to the SLC26A/SulP transporter (TC 2.A.53) family.

Its subcellular location is the membrane. In terms of biological role, chloride/bicarbonate exchanger. This is Putative solute carrier family 26 member 10P (SLC26A10P) from Homo sapiens (Human).